A 222-amino-acid chain; its full sequence is Protein-L-isoaspartate O-methyltransferase (222 aa).

Ser-65 is an active-site residue.

This sequence belongs to the methyltransferase superfamily. L-isoaspartyl/D-aspartyl protein methyltransferase family.

It localises to the cytoplasm. The enzyme catalyses [protein]-L-isoaspartate + S-adenosyl-L-methionine = [protein]-L-isoaspartate alpha-methyl ester + S-adenosyl-L-homocysteine. Its function is as follows. Catalyzes the methyl esterification of L-isoaspartyl residues in peptides and proteins that result from spontaneous decomposition of normal L-aspartyl and L-asparaginyl residues. It plays a role in the repair and/or degradation of damaged proteins. The chain is Protein-L-isoaspartate O-methyltransferase from Chlorobium luteolum (strain DSM 273 / BCRC 81028 / 2530) (Pelodictyon luteolum).